The chain runs to 224 residues: MSKKTIVSMAVIRRLPRYHRYLEELLKNDVKRISSRELSEKMGVTASQIRQDLNNFGGFGQQGYGYNVEELYNNLTKILGLDKTYNTIIIGAGNLGQAIANYTSFEKSGFNLKGIFDINPRLFGLKIRDVEVMDIETVEDFIARNKIDIGILCIPKDNAQYTADRLVRAGIKAIWNFSPIDLKVPDDVILENVHLSDSLFTVSYRLNEEELFKKLKGETAKIDG.

Residues 17 to 56 (RYHRYLEELLKNDVKRISSRELSEKMGVTASQIRQDLNNF) constitute a DNA-binding region (H-T-H motif). 91–96 (GAGNLG) lines the NAD(+) pocket.

The protein belongs to the transcriptional regulatory Rex family. Homodimer.

It localises to the cytoplasm. Modulates transcription in response to changes in cellular NADH/NAD(+) redox state. The sequence is that of Redox-sensing transcriptional repressor Rex from Thermoanaerobacter sp. (strain X514).